A 361-amino-acid chain; its full sequence is Phosphoserine aminotransferase (361 aa).

Arginine 42 contributes to the L-glutamate binding site. Residues 76–77 (AT), tryptophan 102, threonine 152, aspartate 172, and glutamine 195 each bind pyridoxal 5'-phosphate. Residue lysine 196 is modified to N6-(pyridoxal phosphate)lysine. Residue 237–238 (NT) coordinates pyridoxal 5'-phosphate.

It belongs to the class-V pyridoxal-phosphate-dependent aminotransferase family. SerC subfamily. As to quaternary structure, homodimer. Requires pyridoxal 5'-phosphate as cofactor.

It is found in the cytoplasm. The catalysed reaction is O-phospho-L-serine + 2-oxoglutarate = 3-phosphooxypyruvate + L-glutamate. The enzyme catalyses 4-(phosphooxy)-L-threonine + 2-oxoglutarate = (R)-3-hydroxy-2-oxo-4-phosphooxybutanoate + L-glutamate. It participates in amino-acid biosynthesis; L-serine biosynthesis; L-serine from 3-phospho-D-glycerate: step 2/3. Its pathway is cofactor biosynthesis; pyridoxine 5'-phosphate biosynthesis; pyridoxine 5'-phosphate from D-erythrose 4-phosphate: step 3/5. Functionally, catalyzes the reversible conversion of 3-phosphohydroxypyruvate to phosphoserine and of 3-hydroxy-2-oxo-4-phosphonooxybutanoate to phosphohydroxythreonine. The chain is Phosphoserine aminotransferase from Stenotrophomonas maltophilia (strain K279a).